The chain runs to 268 residues: 14-3-3-like protein GF14 iota (268 aa).

Serine 70 and serine 193 each carry phosphoserine. Residue threonine 214 is modified to Phosphothreonine. A disordered region spans residues 240-268; sequence DLPEDGGEDNIKTEESKQEQAKPADATEN. Basic and acidic residues predominate over residues 248 to 261; that stretch reads DNIKTEESKQEQAK.

This sequence belongs to the 14-3-3 family. As to expression, expressed in flowers.

It localises to the nucleus. Its subcellular location is the cytoplasm. Is associated with a DNA binding complex that binds to the G box, a well-characterized cis-acting DNA regulatory element found in plant genes. This is 14-3-3-like protein GF14 iota from Arabidopsis thaliana (Mouse-ear cress).